Consider the following 189-residue polypeptide: Transmembrane protein 229b (189 aa).

At 1–17 (MATTVTPEPLTALSRWY) the chain is on the cytoplasmic side. Residues 18–38 (LYAIHGYFCEVMFTAAWEFVV) traverse the membrane as a helical segment. Residues 39-43 (NCNWK) lie on the Extracellular side of the membrane. The chain crosses the membrane as a helical span at residues 44–64 (FPGVTSVWALFIYGTCILIVE). Residues 65 to 75 (RMYLCLKDRCN) lie on the Cytoplasmic side of the membrane. The helical transmembrane segment at 76-96 (VLLRCIIYTLWTYFWEFGTGF) threads the bilayer. Residues 97–114 (LLRQFNACPWDYSEFKYN) are Extracellular-facing. A helical transmembrane segment spans residues 115–135 (FMGLITAEYAVPWFCASFIVE). Residues 136-189 (RLVIRNTLRLRFDEVAESGQAEERLDRGGGGRGGRRGRGARAGATSANGYVKVD) are Cytoplasmic-facing. The tract at residues 158–189 (ERLDRGGGGRGGRRGRGARAGATSANGYVKVD) is disordered.

It belongs to the TMEM229 family.

It localises to the membrane. The polypeptide is Transmembrane protein 229b (tmem229b) (Danio rerio (Zebrafish)).